A 120-amino-acid polypeptide reads, in one-letter code: MEPLGDRRPCCVCITKNRNCPRFCEYAEYFPYELRSHYESTNELFGTPKIIKMMRHAPEEKKQMLATSIIMEGNAWTNDPVSGGFGMVQKIMWKIMLHKAYLHELEEKIKEEKEKIELHL.

Residues 8-109 (RPCCVCITKN…AYLHELEEKI (102 aa)) form the LOB domain.

The protein belongs to the LOB domain-containing protein family.

This Arabidopsis thaliana (Mouse-ear cress) protein is LOB domain-containing protein 8 (LBD8).